The chain runs to 1070 residues: DNA-directed RNA polymerase subunit beta (1070 aa).

The protein belongs to the RNA polymerase beta chain family. In plastids the minimal PEP RNA polymerase catalytic core is composed of four subunits: alpha, beta, beta', and beta''. When a (nuclear-encoded) sigma factor is associated with the core the holoenzyme is formed, which can initiate transcription.

The protein localises to the plastid. It localises to the chloroplast. The enzyme catalyses RNA(n) + a ribonucleoside 5'-triphosphate = RNA(n+1) + diphosphate. Functionally, DNA-dependent RNA polymerase catalyzes the transcription of DNA into RNA using the four ribonucleoside triphosphates as substrates. The sequence is that of DNA-directed RNA polymerase subunit beta from Chloranthus spicatus (Chulantree).